We begin with the raw amino-acid sequence, 201 residues long: Small ribosomal subunit protein uS4 (201 aa).

The region spanning 91–157 is the S4 RNA-binding domain; it reads SRLDNVIYRA…VPFQIARETV (67 aa).

Belongs to the universal ribosomal protein uS4 family. As to quaternary structure, part of the 30S ribosomal subunit. Contacts protein S5. The interaction surface between S4 and S5 is involved in control of translational fidelity.

In terms of biological role, one of the primary rRNA binding proteins, it binds directly to 16S rRNA where it nucleates assembly of the body of the 30S subunit. With S5 and S12 plays an important role in translational accuracy. The sequence is that of Small ribosomal subunit protein uS4 from Mycobacterium leprae (strain Br4923).